A 220-amino-acid polypeptide reads, in one-letter code: Ribose-5-phosphate isomerase A (220 aa).

Residues 28 to 31 (TGST), 81 to 84 (DGAD), and 94 to 97 (KGGG) each bind substrate. The Proton acceptor role is filled by Glu-103. Lys-121 is a substrate binding site.

The protein belongs to the ribose 5-phosphate isomerase family. As to quaternary structure, homodimer.

It carries out the reaction aldehydo-D-ribose 5-phosphate = D-ribulose 5-phosphate. The protein operates within carbohydrate degradation; pentose phosphate pathway; D-ribose 5-phosphate from D-ribulose 5-phosphate (non-oxidative stage): step 1/1. Its function is as follows. Catalyzes the reversible conversion of ribose-5-phosphate to ribulose 5-phosphate. This Coxiella burnetii (strain CbuK_Q154) (Coxiella burnetii (strain Q154)) protein is Ribose-5-phosphate isomerase A.